Consider the following 243-residue polypeptide: MGKRPLVRRRGRGGMQFRAATTGKIARAKYPAFELGEQREGTVIDLVHERGRDAPLAKIRFEDGIVSYVPAVLGTRVGSSMNFGLKSEIRDGNVISVQNIPDGTTVCNVEKHYGDGGAIVKSAGGNATVFSHGEGGVVLKLPSGRFSTLNPKNRAMVGTLAGGGVSERPFMSAGGKWRRFRSKGRKYPIVRGVAQAAYVHPHGGGRHQHVGQSSTVSRNAPPGAKVGSIAARKTGRAKIKDRR.

Residues 202 to 243 (HGGGRHQHVGQSSTVSRNAPPGAKVGSIAARKTGRAKIKDRR) are disordered. Over residues 233–243 (KTGRAKIKDRR) the composition is skewed to basic residues.

It belongs to the universal ribosomal protein uL2 family. Part of the 50S ribosomal subunit. Forms a bridge to the 30S subunit in the 70S ribosome.

Its function is as follows. One of the primary rRNA binding proteins. Required for association of the 30S and 50S subunits to form the 70S ribosome, for tRNA binding and peptide bond formation. It has been suggested to have peptidyltransferase activity; this is somewhat controversial. Makes several contacts with the 16S rRNA in the 70S ribosome. This Cenarchaeum symbiosum (strain A) protein is Large ribosomal subunit protein uL2.